A 478-amino-acid polypeptide reads, in one-letter code: Transposase for insertion sequence element IS231B (478 aa).

Belongs to the transposase 11 family.

Its function is as follows. Involved in the transposition of the insertion sequence. This is Transposase for insertion sequence element IS231B from Bacillus thuringiensis subsp. berliner.